The following is a 197-amino-acid chain: RNA-binding protein Rsf1 (197 aa).

In terms of domain architecture, RRM spans 7–80 (TRVYVGNLTD…SQLRVEISKG (74 aa)). The interval 74 to 197 (RVEISKGRPR…SRSPVGNHRF (124 aa)) is disordered. Residues 89–102 (GPMDRGGRRGDFGR) are compositionally biased toward basic and acidic residues. Residue threonine 106 is modified to Phosphothreonine. 2 stretches are compositionally biased toward low complexity: residues 117–144 (QRGS…SYNG) and 166–176 (RYSSGSSASYG). Phosphoserine is present on residues serine 168, serine 171, serine 174, serine 188, and serine 190.

The protein belongs to the splicing factor SR family. Post-translationally, extensively phosphorylated on serine residues in the RS domain.

The protein resides in the nucleus. May control important aspects of development. This is RNA-binding protein Rsf1 (Rsf1) from Drosophila melanogaster (Fruit fly).